The primary structure comprises 431 residues: Glutamate-1-semialdehyde 2,1-aminomutase (431 aa).

An N6-(pyridoxal phosphate)lysine modification is found at K265.

Belongs to the class-III pyridoxal-phosphate-dependent aminotransferase family. HemL subfamily. Homodimer. Pyridoxal 5'-phosphate is required as a cofactor.

Its subcellular location is the cytoplasm. It catalyses the reaction (S)-4-amino-5-oxopentanoate = 5-aminolevulinate. It functions in the pathway porphyrin-containing compound metabolism; protoporphyrin-IX biosynthesis; 5-aminolevulinate from L-glutamyl-tRNA(Glu): step 2/2. The sequence is that of Glutamate-1-semialdehyde 2,1-aminomutase from Vibrio campbellii (strain ATCC BAA-1116).